The chain runs to 636 residues: Tumor protein p73 (636 aa).

The segment at 1–46 is transactivation; sequence MAQSTATSPDGGTTFEHLWSSLEPDSTYFDLPQSSRGNNEVVGGTD. A Phosphothreonine; by PLK1 modification is found at Thr27. Position 28 is a phosphotyrosine; by SRC and HCK (Tyr28). A disordered region spans residues 78–104; sequence RAASASPYTPEHAASVPTHSPYAQPSS. The segment covering 94–104 has biased composition (polar residues); that stretch reads PTHSPYAQPSS. A Phosphotyrosine; by ABL1 modification is found at Tyr99. A DNA-binding region spans residues 131-310; it reads FQQSSTAKSA…DRKADEDHYR (180 aa). Zn(2+) contacts are provided by Cys194, His197, Cys258, and Cys262. The segment at 314 to 345 is disordered; it reads ALNESSAKNGAASKRAFKQSPPAVPALGAGVK. The tract at residues 345–380 is interaction with HIPK2; that stretch reads KKRRHGDEDTYYLQVRGRENFEILMKLKESLELMEL. The tract at residues 345–386 is oligomerization; sequence KKRRHGDEDTYYLQVRGRENFEILMKLKESLELMELVPQPLV. The short motif at 483–487 is the PPxY motif element; it reads PPPPY. The region spanning 485–551 is the SAM domain; sequence PPYHADPSLV…WRGLQDLKQG (67 aa). Lys627 is covalently cross-linked (Glycyl lysine isopeptide (Lys-Gly) (interchain with G-Cter in SUMO); in isoform Alpha). A Glycyl lysine isopeptide (Lys-Gly) (interchain with G-Cter in SUMO2) cross-link involves residue Lys627.

This sequence belongs to the p53 family. As to quaternary structure, found in a complex with p53/TP53 and CABLES1. The C-terminal oligomerization domain binds to the ABL1 tyrosine kinase SH3 domain. Interacts with HECW2. Isoform Beta interacts homotypically and with p53/TP53, whereas isoform Alpha does not. Isoform Gamma interacts homotypically and with all p73 isoforms. Isoform Delta interacts with isoform Gamma, isoform Alpha, and homotypically. Isoforms Alpha and Beta interact with HIPK2. Isoform Alpha interacts with RANBP9. Isoform Beta interacts with WWOX. Interacts (via SAM domain) with FBXO45 (via B30.2/SPRY domain). Interacts with YAP1 (phosphorylated form). Interacts with HCK (via SH3 domain); this inhibits TP73 activity and degradation. Interacts (via SAM domain) with NQO1; this interaction is NADH-dependent, stabilizes TP73 in response to oxidative stress and protects it from ubiquitin-independent degradation by the 20S proteasome. (Microbial infection) Interacts with Epstein-Barr virus protein EBNA6; this interaction inhibits TP73-mediated apoptotic pathway. Requires Zn(2+) as cofactor. In terms of processing, isoform alpha (but not isoform beta) is sumoylated on Lys-627, which potentiates proteasomal degradation but does not affect transcriptional activity. Phosphorylation by PLK1 and PLK3 inhibits the transcription regulator activity and pro-apoptotic function. Post-translationally, higher levels of phosphorylation seen in the brain from patients with Huntington disease. Polyubiquitinated by RCHY1/PIRH2; leading to its degradation by the proteasome. In terms of tissue distribution, expressed in striatal neurons of patients with Huntington disease (at protein level). Brain, kidney, placenta, colon, heart, liver, spleen, skeletal muscle, prostate, thymus and pancreas. Highly expressed in fetal tissue. Expressed in the respiratory epithelium.

It localises to the nucleus. The protein localises to the cytoplasm. Participates in the apoptotic response to DNA damage. Isoforms containing the transactivation domain are pro-apoptotic, isoforms lacking the domain are anti-apoptotic and block the function of p53 and transactivating p73 isoforms. May be a tumor suppressor protein. Is an activator of FOXJ1 expression. It is an essential factor for the positive regulation of lung ciliated cell differentiation. This is Tumor protein p73 (TP73) from Homo sapiens (Human).